An 80-amino-acid polypeptide reads, in one-letter code: Exodeoxyribonuclease 7 small subunit (80 aa).

The protein belongs to the XseB family. Heterooligomer composed of large and small subunits.

The protein resides in the cytoplasm. The enzyme catalyses Exonucleolytic cleavage in either 5'- to 3'- or 3'- to 5'-direction to yield nucleoside 5'-phosphates.. Functionally, bidirectionally degrades single-stranded DNA into large acid-insoluble oligonucleotides, which are then degraded further into small acid-soluble oligonucleotides. This Rickettsia bellii (strain OSU 85-389) protein is Exodeoxyribonuclease 7 small subunit.